Here is a 464-residue protein sequence, read N- to C-terminus: Argininosuccinate lyase (464 aa).

The protein belongs to the lyase 1 family. Argininosuccinate lyase subfamily.

Its subcellular location is the cytoplasm. The catalysed reaction is 2-(N(omega)-L-arginino)succinate = fumarate + L-arginine. It functions in the pathway amino-acid biosynthesis; L-arginine biosynthesis; L-arginine from L-ornithine and carbamoyl phosphate: step 3/3. In Ectopseudomonas mendocina (strain ymp) (Pseudomonas mendocina), this protein is Argininosuccinate lyase.